Consider the following 78-residue polypeptide: Small ribosomal subunit protein bS18 (78 aa).

Belongs to the bacterial ribosomal protein bS18 family. As to quaternary structure, part of the 30S ribosomal subunit. Forms a tight heterodimer with protein bS6.

Its function is as follows. Binds as a heterodimer with protein bS6 to the central domain of the 16S rRNA, where it helps stabilize the platform of the 30S subunit. This is Small ribosomal subunit protein bS18 from Frankia casuarinae (strain DSM 45818 / CECT 9043 / HFP020203 / CcI3).